The primary structure comprises 396 residues: Histidine-rich glycoprotein (396 aa).

Cystatin domains are found at residues 1 to 102 (AVNP…SALT) and 103 to 169 (NMRA…RFSA). Cystine bridges form between Cys7-Cys375, Cys56-Cys67, Cys77-Cys92, Cys123-Cys297, Cys137-Cys160, and Cys212-Cys242. Asn70 is a glycosylation site (N-linked (GlcNAc...) asparagine; partial). N-linked (GlcNAc...) asparagine glycans are attached at residues Asn91 and Asn122. Positions 176-322 (RPFHSGEHEH…GPGKGHFRFH (147 aa)) are disordered. The span at 197 to 208 (GSKDHGHPHESY) shows a compositional bias: basic and acidic residues. N-linked (GlcNAc...) asparagine glycosylation is present at Asn220. Positions 233–246 (LPFPPPGLRCPHPP) are enriched in pro residues. Positions 255–265 (PPHDHSSDEHH) are enriched in basic and acidic residues. Over residues 266–284 (PHGHHPHGHHPHGHHPHGH) the composition is skewed to basic residues. Basic and acidic residues predominate over residues 285–296 (HPPDNDFYDHGP). The span at 304–322 (PPPRHSKERGPGKGHFRFH) shows a compositional bias: basic residues. Residue Ser309 is modified to Phosphoserine.

Interacts (via the HRR domain) with TPM1; the interaction appears to contribute to the antiangiogenic properties of the HRR domain. Interacts with THBS1 (via the TSP type I repeats); the interaction blocks the antiangiogenic effect of THBS1 with CD36. Interacts with PLG (via its Kringle domains); the interaction tethers PLG to the cell surface and enhances its activation. Interacts with THBS2; the interaction blocks the antiangiogenic effect of THBS2 with CD36. Interacts with HPSE; the interaction is enhanced at acidic pH, partially inhibits binding of HPSE to cell surface receptors and modulates its enzymatic activity. Interacts (via the HRR domain) with TMP1; the interaction partially mediates the antiangiogenic properties of HRG. Interacts with kappa and lambda light chains of IgG molecules. Interacts with ATP5F1A; the interaction occurs on the surface of T-cells and alters their cell morphology in concert with CONA. Binds IgG molecules containing kappa and lambda light chains and inhibits the formation of insoluble immunoglobulin complexes. Interacts with F12; the interaction, which is enhanced in the presence of zinc ions and inhibited by heparin-binding to HRG, inhibits factor XII autoactivation and contact-initiated coagulation. In terms of processing, N-glycosylated. Proteolytic cleavage produces several HRG fragments which are mostly disulfide-linked and, therefore, not released. On platelet activation, may release a 33 kDa antiangiogenic peptide which encompasses the HRR.

Its subcellular location is the secreted. Plasma glycoprotein that binds a number of ligands such as heme, heparin, heparan sulfate, thrombospondin, plasminogen, and divalent metal ions. Inhibits rosette formation. Acts as an adapter protein and implicated in regulating many processes such as immune complex and pathogen clearance, cell adhesion, angiogenesis, coagulation and fibrinolysis. Mediates clearance of necrotic cells through enhancing the phagocytosis of necrotic cells in a heparan sulfate-dependent pathway. This process can be regulated by the presence of certain HRG ligands such as heparin and zinc ions. Binds to IgG subclasses of immunoglobins containing kappa and lambda light chains with different affinities regulating their clearance and inhibiting the formation of insoluble immune complexes. Tethers plasminogen to the cell surface. Binds T-cells and alters the cell morphology. Modulates angiogenesis by blocking the CD6-mediated antiangiongenic effect of thrombospondins, THBS1 and THBS2. This chain is Histidine-rich glycoprotein (HRG), found in Bos taurus (Bovine).